Reading from the N-terminus, the 156-residue chain is RING finger protein 224 (156 aa).

The segment at 23 to 70 (CIICYSAYDLSVHLPRRLYCGHTFCQACMQRLDMPAHEQHWIPCPQCR) adopts an RING-type zinc-finger fold.

The protein is RING finger protein 224 (Rnf224) of Mus musculus (Mouse).